A 1960-amino-acid polypeptide reads, in one-letter code: Transcription factor 20 (1960 aa).

Residues 1–18 (MQSFREQSSYHGNQQSYP) show a composition bias toward polar residues. Residues 1 to 287 (MQSFREQSSY…GSNAQAYGTQ (287 aa)) form a disordered region. Residues 42-60 (GGTGGSSGSSGSGSGGGRR) show a composition bias toward gly residues. At Arg-60 the chain carries Omega-N-methylarginine. Low complexity predominate over residues 61–75 (GAAAAAAAMASETSG). The segment covering 122–131 (QGSSFGNQYG) has biased composition (polar residues). Residues 164–192 (SAQYQQQASSQQQQQQVQQLRQQLYQSHQ) show a composition bias toward low complexity. Polar residues predominate over residues 193–219 (PLPQATGQPASSSSHLQPMQRPSTLPS). Residues 236-259 (QSSASSSSSSSFPSPQRFSQSGQS) are compositionally biased toward low complexity. Polar residues-rich tracts occupy residues 260-270 (YDGSYNVNAGS) and 277-287 (VGSNAQAYGTQ). Residue Lys-304 forms a Glycyl lysine isopeptide (Lys-Gly) (interchain with G-Cter in SUMO2) linkage. Disordered stretches follow at residues 305–328 (IPQGTQQGQQQQQPQQQQHPSQHV) and 360–392 (FHQNFSPISNPSPAASVVQSPSCSSTPSPLMQT). Composition is skewed to low complexity over residues 306–322 (PQGTQQGQQQQQPQQQQ) and 368–388 (SNPSPAASVVQSPSCSSTPSP). Ser-419 and Ser-430 each carry phosphoserine. The segment at 476–748 (SDALTPQKKT…HGERKGRNEK (273 aa)) is disordered. Polar residues-rich tracts occupy residues 497-508 (SCTNSEGSSQPE) and 537-547 (LSGQSTSSDTT). 4 positions are modified to phosphoserine: Ser-538, Ser-559, Ser-574, and Ser-583. An N6-acetyllysine modification is found at Lys-602. Basic and acidic residues predominate over residues 616 to 628 (RVEKPGGQDKGSQ). At Ser-640 the chain carries Phosphoserine. Low complexity predominate over residues 665–677 (GNKNGDNNSNHNG). Polar residues predominate over residues 693 to 702 (TSRTEPSKSP). Residues Lys-710, Lys-733, Lys-748, Lys-823, Lys-832, and Lys-844 each participate in a glycyl lysine isopeptide (Lys-Gly) (interchain with G-Cter in SUMO2) cross-link. A compositionally biased stretch (basic and acidic residues) spans 732-748 (EKGDFTGHGERKGRNEK). Position 871 is a phosphoserine (Ser-871). Residues Lys-920 and Lys-922 each participate in a glycyl lysine isopeptide (Lys-Gly) (interchain with G-Cter in SUMO2) cross-link. The tract at residues 920-1037 (KLKSQSGQIK…GDPHHMNPHM (118 aa)) is disordered. Lys-929 is covalently cross-linked (Glycyl lysine isopeptide (Lys-Gly) (interchain with G-Cter in SUMO1); alternate). Lys-929 is covalently cross-linked (Glycyl lysine isopeptide (Lys-Gly) (interchain with G-Cter in SUMO2); alternate). A compositionally biased stretch (polar residues) spans 936–945 (SKSQASFNNK). Over residues 946–961 (KSGDHCHPPSIKHESY) the composition is skewed to basic and acidic residues. A Glycyl lysine isopeptide (Lys-Gly) (interchain with G-Cter in SUMO2) cross-link involves residue Lys-957. 2 positions are modified to phosphoserine: Ser-966 and Ser-1005. Lys-1015 is covalently cross-linked (Glycyl lysine isopeptide (Lys-Gly) (interchain with G-Cter in SUMO2)). An Omega-N-methylarginine modification is found at Arg-1024. Residue Ser-1053 is modified to Phosphoserine. Residues Lys-1086, Lys-1098, Lys-1137, Lys-1173, Lys-1178, Lys-1183, Lys-1210, Lys-1231, Lys-1267, and Lys-1274 each participate in a glycyl lysine isopeptide (Lys-Gly) (interchain with G-Cter in SUMO2) cross-link. Disordered regions lie at residues 1110 to 1142 (AAAQHRQEGPRKSPRQQQFLDRVRSPLKNDKDG), 1162 to 1285 (RCLM…GRLL), and 1303 to 1331 (SHSQDIKSIPKRDSSKDLPSPDSRNCPAV). A compositionally biased stretch (basic and acidic residues) spans 1130–1142 (DRVRSPLKNDKDG). The tract at residues 1170–1191 (LPNKGMELKHGSQKLQESCWDL) is leucine-zipper. Residues 1254 to 1268 (RRRVRSFISPIPSKR) carry the Nuclear localization signal motif. The segment covering 1304–1318 (HSQDIKSIPKRDSSK) has biased composition (basic and acidic residues). Phosphoserine is present on Ser-1305. Residue Lys-1309 forms a Glycyl lysine isopeptide (Lys-Gly) (interchain with G-Cter in SUMO2) linkage. Phosphoserine is present on Ser-1335. Residue Lys-1338 forms a Glycyl lysine isopeptide (Lys-Gly) (interchain with G-Cter in SUMO2) linkage. Ser-1361 bears the Phosphoserine mark. Positions 1384–1607 (DILSLKSGPP…TKQAVPIVEP (224 aa)) are disordered. Glycyl lysine isopeptide (Lys-Gly) (interchain with G-Cter in SUMO2) cross-links involve residues Lys-1389, Lys-1409, Lys-1428, and Lys-1446. A compositionally biased stretch (basic and acidic residues) spans 1424-1451 (LHVEKPLPRSSEEWRGSVDDKVKTETHA). Positions 1464 to 1477 (MTSTTSQKPGSNQG) are enriched in polar residues. Residue Lys-1510 forms a Glycyl lysine isopeptide (Lys-Gly) (interchain with G-Cter in SUMO2) linkage. Residue Ser-1522 is modified to Phosphoserine. A Glycyl lysine isopeptide (Lys-Gly) (interchain with G-Cter in SUMO2) cross-link involves residue Lys-1524. A DNA-binding region (a.T hook) is located at residues 1537 to 1551 (GKKKGRPIGSVNKQK). Residues 1555–1566 (QPPPPPPQPPQI) are compositionally biased toward pro residues. The Nuclear localization signal signature appears at 1576-1600 (KPKKQRQRRERRKPGAQPRKRKTKQ). The segment covering 1578–1599 (KKQRQRRERRKPGAQPRKRKTK) has biased composition (basic residues). Residue Lys-1613 forms a Glycyl lysine isopeptide (Lys-Gly) (interchain with G-Cter in SUMO2) linkage. Disordered regions lie at residues 1660-1683 (LVRGRKGQRSLTPPPSSTESKALP) and 1732-1839 (TLPK…PELE). Ser-1669 is subject to Phosphoserine. 3 positions are modified to phosphothreonine: Thr-1671, Thr-1762, and Thr-1764. Positions 1785–1792 (RFKRRHRS) match the Nuclear localization signal motif. Residues 1829–1865 (PTTSEGGPELELQIPELPLDSNEFWVHEGCILWANGI) form a C2HC pre-PHD-type; degenerate zinc finger. The segment at 1885–1933 (MKCSHCQEAGATLGCYNKGCSFRYHYPCAIDADCLLHEENFSVRCPKHK) adopts a PHD-type zinc-finger fold. A disordered region spans residues 1939–1960 (PLPPLQNKTAKGSLSTEQSERG). The span at 1944–1960 (QNKTAKGSLSTEQSERG) shows a compositional bias: polar residues.

As to quaternary structure, homodimer. Interacts with RNF4 and JUN. Expressed in most tissues, except in ovary and prostate. Isoform 1 is exclusively expressed in brain, heart and testis, and this form predominates in liver and kidney. Isoform 2 predominates in lung.

The protein localises to the nucleus. Its function is as follows. Transcriptional activator that binds to the regulatory region of MMP3 and thereby controls stromelysin expression. It stimulates the activity of various transcriptional activators such as JUN, SP1, PAX6 and ETS1, suggesting a function as a coactivator. This Homo sapiens (Human) protein is Transcription factor 20 (TCF20).